Consider the following 245-residue polypeptide: 2,3-bisphosphoglycerate-dependent phosphoglycerate mutase (245 aa).

Substrate contacts are provided by residues 8-15, 21-22, R60, 87-90, K98, 114-115, and 183-184; these read RHGQSLWN, TG, ERHY, RR, and GN. Catalysis depends on H9, which acts as the Tele-phosphohistidine intermediate. E87 serves as the catalytic Proton donor/acceptor.

It belongs to the phosphoglycerate mutase family. BPG-dependent PGAM subfamily.

It carries out the reaction (2R)-2-phosphoglycerate = (2R)-3-phosphoglycerate. It participates in carbohydrate degradation; glycolysis; pyruvate from D-glyceraldehyde 3-phosphate: step 3/5. In terms of biological role, catalyzes the interconversion of 2-phosphoglycerate and 3-phosphoglycerate. This Bacillus anthracis (strain A0248) protein is 2,3-bisphosphoglycerate-dependent phosphoglycerate mutase.